A 200-amino-acid polypeptide reads, in one-letter code: Glycerol-3-phosphate acyltransferase (200 aa).

Helical transmembrane passes span 8-28 (ALAL…GMVL), 57-77 (LAAA…VLAA), 88-108 (IAGL…FAGG), 114-134 (FLGI…LAWL), and 159-179 (FLLG…LIFW).

Belongs to the PlsY family. As to quaternary structure, probably interacts with PlsX.

It is found in the cell inner membrane. It catalyses the reaction an acyl phosphate + sn-glycerol 3-phosphate = a 1-acyl-sn-glycero-3-phosphate + phosphate. The protein operates within lipid metabolism; phospholipid metabolism. Catalyzes the transfer of an acyl group from acyl-phosphate (acyl-PO(4)) to glycerol-3-phosphate (G3P) to form lysophosphatidic acid (LPA). This enzyme utilizes acyl-phosphate as fatty acyl donor, but not acyl-CoA or acyl-ACP. This is Glycerol-3-phosphate acyltransferase from Roseobacter denitrificans (strain ATCC 33942 / OCh 114) (Erythrobacter sp. (strain OCh 114)).